The following is a 96-amino-acid chain: Small ribosomal subunit protein bS6 (96 aa).

This sequence belongs to the bacterial ribosomal protein bS6 family.

In terms of biological role, binds together with bS18 to 16S ribosomal RNA. This is Small ribosomal subunit protein bS6 from Carboxydothermus hydrogenoformans (strain ATCC BAA-161 / DSM 6008 / Z-2901).